Consider the following 245-residue polypeptide: MTFTASSSSCAITESPVVVALDYHERDKALAFVDKIDPRDCRLKVGKEMFTLFGPQLVRDLQQRGFDVFLDLKFHDIPNTTARAVAAAADLGVWMVNVHASGGARMMAAARDALAPFSKDAPLLIAVTVLTSMETSDLHDLGVTLSPAEHAERLARLTQQCGLDGVVCSAQEAVRFKQAFGAAFKLVTPGIRPAGSEAGDQRRIMTPEQALSAGVDYMVIGRPVTQSVDPAQTLKDINASLKREA.

Residues aspartate 22, lysine 44, 71-80 (DLKFHDIPNT), threonine 131, arginine 192, glutamine 201, glycine 221, and arginine 222 contribute to the substrate site. Catalysis depends on lysine 73, which acts as the Proton donor.

It belongs to the OMP decarboxylase family. Type 1 subfamily. As to quaternary structure, homodimer.

The enzyme catalyses orotidine 5'-phosphate + H(+) = UMP + CO2. It functions in the pathway pyrimidine metabolism; UMP biosynthesis via de novo pathway; UMP from orotate: step 2/2. Catalyzes the decarboxylation of orotidine 5'-monophosphate (OMP) to uridine 5'-monophosphate (UMP). This chain is Orotidine 5'-phosphate decarboxylase, found in Salmonella typhimurium (strain LT2 / SGSC1412 / ATCC 700720).